A 248-amino-acid polypeptide reads, in one-letter code: PF03932 family protein CutC (248 aa).

Belongs to the CutC family.

The protein localises to the cytoplasm. This Photorhabdus laumondii subsp. laumondii (strain DSM 15139 / CIP 105565 / TT01) (Photorhabdus luminescens subsp. laumondii) protein is PF03932 family protein CutC.